A 387-amino-acid polypeptide reads, in one-letter code: S-adenosylmethionine synthase (387 aa).

An ATP-binding site is contributed by His-19. Residue Asp-21 coordinates Mg(2+). Glu-47 is a K(+) binding site. Gln-103 provides a ligand contact to L-methionine. Residues 103-113 are flexible loop; that stretch reads QSPDIAQGVEL. ATP contacts are provided by residues 167 to 169, 233 to 234, Asp-242, 248 to 249, Ala-265, and Lys-269; these read DMK, RF, and RK. Asp-242 lines the L-methionine pocket. Lys-273 is an L-methionine binding site.

It belongs to the AdoMet synthase family. In terms of assembly, homotetramer; dimer of dimers. It depends on Mg(2+) as a cofactor. K(+) serves as cofactor.

The protein resides in the cytoplasm. The catalysed reaction is L-methionine + ATP + H2O = S-adenosyl-L-methionine + phosphate + diphosphate. It participates in amino-acid biosynthesis; S-adenosyl-L-methionine biosynthesis; S-adenosyl-L-methionine from L-methionine: step 1/1. Its function is as follows. Catalyzes the formation of S-adenosylmethionine (AdoMet) from methionine and ATP. The overall synthetic reaction is composed of two sequential steps, AdoMet formation and the subsequent tripolyphosphate hydrolysis which occurs prior to release of AdoMet from the enzyme. The sequence is that of S-adenosylmethionine synthase from Mycoplasma mycoides subsp. mycoides SC (strain CCUG 32753 / NCTC 10114 / PG1).